A 178-amino-acid chain; its full sequence is Oligoribonuclease (178 aa).

Residues 7–168 (LIWIDLEMTG…DDIRESIAEL (162 aa)) form the Exonuclease domain. Tyr128 is an active-site residue.

It belongs to the oligoribonuclease family.

It localises to the cytoplasm. Its function is as follows. 3'-to-5' exoribonuclease specific for small oligoribonucleotides. This Pseudomonas syringae pv. tomato (strain ATCC BAA-871 / DC3000) protein is Oligoribonuclease.